We begin with the raw amino-acid sequence, 263 residues long: Purine nucleoside phosphorylase SAS1121 (263 aa).

Zn(2+) contacts are provided by His79, Cys124, and His141.

It belongs to the purine nucleoside phosphorylase YfiH/LACC1 family. In terms of assembly, homodimer. It depends on Cu(2+) as a cofactor. Zn(2+) serves as cofactor.

It catalyses the reaction adenosine + phosphate = alpha-D-ribose 1-phosphate + adenine. The enzyme catalyses S-methyl-5'-thioadenosine + phosphate = 5-(methylsulfanyl)-alpha-D-ribose 1-phosphate + adenine. The catalysed reaction is inosine + phosphate = alpha-D-ribose 1-phosphate + hypoxanthine. It carries out the reaction adenosine + H2O + H(+) = inosine + NH4(+). Its function is as follows. Purine nucleoside enzyme that catalyzes the phosphorolysis of adenosine and inosine nucleosides, yielding D-ribose 1-phosphate and the respective free bases, adenine and hypoxanthine. Also catalyzes the phosphorolysis of S-methyl-5'-thioadenosine into adenine and S-methyl-5-thio-alpha-D-ribose 1-phosphate. Also has adenosine deaminase activity. The polypeptide is Purine nucleoside phosphorylase SAS1121 (Staphylococcus aureus (strain MSSA476)).